The chain runs to 73 residues: Translation initiation factor IF-1 (73 aa).

An S1-like domain is found at 1–73; sequence MAKKDGVIEI…TRGRIVYRYK (73 aa).

This sequence belongs to the IF-1 family. In terms of assembly, component of the 30S ribosomal translation pre-initiation complex which assembles on the 30S ribosome in the order IF-2 and IF-3, IF-1 and N-formylmethionyl-tRNA(fMet); mRNA recruitment can occur at any time during PIC assembly.

It is found in the cytoplasm. Functionally, one of the essential components for the initiation of protein synthesis. Stabilizes the binding of IF-2 and IF-3 on the 30S subunit to which N-formylmethionyl-tRNA(fMet) subsequently binds. Helps modulate mRNA selection, yielding the 30S pre-initiation complex (PIC). Upon addition of the 50S ribosomal subunit IF-1, IF-2 and IF-3 are released leaving the mature 70S translation initiation complex. In Paenarthrobacter aurescens (strain TC1), this protein is Translation initiation factor IF-1.